Consider the following 161-residue polypeptide: Regulator of ribonuclease activity A (161 aa).

This sequence belongs to the RraA family. In terms of assembly, homotrimer. Binds to both RNA-binding sites in the C-terminal region of Rne and to RhlB.

It localises to the cytoplasm. Globally modulates RNA abundance by binding to RNase E (Rne) and regulating its endonucleolytic activity. Can modulate Rne action in a substrate-dependent manner by altering the composition of the degradosome. Modulates RNA-binding and helicase activities of the degradosome. This chain is Regulator of ribonuclease activity A, found in Sodalis glossinidius (strain morsitans).